The chain runs to 247 residues: MRYPMSKLAYHRVLLKLSGEALMGSADYGIDPKVINRLAGEVIEAQNAGAELALVIGGGNIFRGAGLAAKGMDRVTGDHMGMLATIINALAMQDALEKLGTKVRVMSAIKINNVCEDFIRRRAIRHLEKSRITIFAAGTGNPFFTTDSGAALRAIEIGADLLLKATKVDGIYNKDPQKHCDAVKYSTLSYDEVISQNLEVMDTAAFALARDSNLPLRIFDIEQPGVLLRILHGEEIGTLVKERNSKS.

Residue 16–19 (KLSG) coordinates ATP. Residue G58 participates in UMP binding. ATP contacts are provided by G59 and R63. UMP is bound by residues D78 and 139 to 146 (TGNPFFTT). 3 residues coordinate ATP: T166, Y172, and D175.

It belongs to the UMP kinase family. Homohexamer.

It is found in the cytoplasm. It carries out the reaction UMP + ATP = UDP + ADP. The protein operates within pyrimidine metabolism; CTP biosynthesis via de novo pathway; UDP from UMP (UMPK route): step 1/1. Inhibited by UTP. In terms of biological role, catalyzes the reversible phosphorylation of UMP to UDP. The sequence is that of Uridylate kinase from Xylella fastidiosa (strain 9a5c).